Here is a 2049-residue protein sequence, read N- to C-terminus: Polyglutamine-repeat protein pqn-41 (2049 aa).

Residues 1-58 are disordered; it reads MKPKKLQQGSDSAHTSDTESTKTCEKTAKKLPKTQKKLQKSKKTAKKRRDEEFRIFFP. Positions 1-1601 are sufficient to prevent linker cell death; sequence MKPKKLQQGS…TTSQHQQSIQ (1601 aa). Over residues 14–28 the composition is skewed to basic and acidic residues; sequence HTSDTESTKTCEKTA. Basic residues predominate over residues 29-47; the sequence is KKLPKTQKKLQKSKKTAKK. Coiled-coil stretches lie at residues 264–302 and 396–432; these read RRQE…ANSD and TNAG…DRNH. Positions 459 to 492 are disordered; that stretch reads RGRNSTENSDSESSSEASEPPDDVITKEEPTDFS. Positions 463–476 are enriched in low complexity; sequence STENSDSESSSEAS. 3 coiled-coil regions span residues 686 to 730, 756 to 796, and 822 to 880; these read ESFE…SFET, ISAD…REFS, and QSSI…ARKL. Over residues 1134-1150 the composition is skewed to low complexity; sequence QQQHNHQNFQQQQQGNH. 4 disordered regions span residues 1134–1198, 1236–1265, 1481–1616, and 1636–1661; these read QQQH…ENAA, AAAA…QQQN, YKQS…GAAY, and ATPK…TSQA. Residues 1162 to 1171 are compositionally biased toward basic residues; the sequence is QKRKYTKRKA. The segment covering 1176–1194 has biased composition (polar residues); the sequence is AVASSSDQNGMKSPGSSAM. Residues 1495-1533 are compositionally biased toward low complexity; it reads STSSSSAAPASAPAPRAGAGAGATSSSAASSSTSTPSSS. Residues 1534–1546 show a composition bias toward basic residues; sequence SHHKKSSPPHHQK. Low complexity-rich tracts occupy residues 1569-1604 and 1649-1661; these read SAPI…QFSQ and ATQQ…TSQA. Coiled coils occupy residues 1659 to 1685 and 1725 to 1801; these read SQAS…AAAA and QQYL…LQNI. The segment at 1836 to 1858 is disordered; the sequence is AQAQQAPPTSQPSQAATPQQQQQ. Coiled coils occupy residues 1863–1961 and 1991–2041; these read RQME…AAAA and SAQQ…AQQK.

As to expression, expressed in the linker cell just before it dies.

The protein localises to the cytoplasm. Its function is as follows. In males, required for non-apoptotic death of the linker cell once it has finished guiding gonad elongation at the end of larval development. May be involved in nuclear envelope crenellation in the linker cell. In males, promotes linker cell survival. In Caenorhabditis elegans, this protein is Polyglutamine-repeat protein pqn-41.